The chain runs to 207 residues: Outer-membrane lipoprotein LolB (207 aa).

Positions 1 to 21 are cleaved as a signal peptide; the sequence is MPLPDFRLIRLLPLAALVLTA. Cys22 carries N-palmitoyl cysteine lipidation. Residue Cys22 is the site of S-diacylglycerol cysteine attachment.

It belongs to the LolB family. As to quaternary structure, monomer.

It is found in the cell outer membrane. Functionally, plays a critical role in the incorporation of lipoproteins in the outer membrane after they are released by the LolA protein. The chain is Outer-membrane lipoprotein LolB from Escherichia coli O127:H6 (strain E2348/69 / EPEC).